A 334-amino-acid chain; its full sequence is E3 ubiquitin-protein ligase ATL4 (334 aa).

Positions 1–20 (MESLINPSHGGGNYDSHSSS) are disordered. Residues 28-48 (VLVIILILLMTLLISVSICFL) form a helical membrane-spanning segment. An RING-type; atypical zinc finger spans residues 117–159 (CAVCLSKFEPEDQLRLLPLCCHAFHADCIDIWLVSNQTCPLCR).

The protein belongs to the RING-type zinc finger family. ATL subfamily.

The protein localises to the membrane. It carries out the reaction S-ubiquitinyl-[E2 ubiquitin-conjugating enzyme]-L-cysteine + [acceptor protein]-L-lysine = [E2 ubiquitin-conjugating enzyme]-L-cysteine + N(6)-ubiquitinyl-[acceptor protein]-L-lysine.. Its pathway is protein modification; protein ubiquitination. In terms of biological role, E3 ubiquitin-protein ligase able to catalyze polyubiquitination with ubiquitin-conjugating enzyme E2 UBC8 in vitro. This Arabidopsis thaliana (Mouse-ear cress) protein is E3 ubiquitin-protein ligase ATL4.